We begin with the raw amino-acid sequence, 146 residues long: Keratin-associated protein 4-1 (146 aa).

18 tandem repeats follow at residues 5-9 (CCGSV), 24-28 (CCRPS), 29-33 (CCQTT), 34-38 (CCCPS), 44-48 (CCRPS), 54-58 (CCQTT), 59-63 (CCRPS), 64-68 (CCHPV), 69-73 (CCQTT), 83-87 (CCRPL), 88-92 (CCQTT), 102-106 (CCRPL), 107-111 (CCQTT), 121-125 (CCRPL), 126-130 (CCQTT), 131-135 (CCRAT), 136-140 (CCRPS), and 141-145 (CCGSS). The segment at 5–145 (CCGSVCSDQG…CCRPSCCGSS (141 aa)) is 18 X 5 AA repeats of C-C-[GRQC]-[SPT]-[VSTL].

The protein belongs to the KRTAP type 4 family. As to quaternary structure, interacts with hair keratins. In terms of tissue distribution, expressed in the hair follicles.

In the hair cortex, hair keratin intermediate filaments are embedded in an interfilamentous matrix, consisting of hair keratin-associated proteins (KRTAP), which are essential for the formation of a rigid and resistant hair shaft through their extensive disulfide bond cross-linking with abundant cysteine residues of hair keratins. The matrix proteins include the high-sulfur and high-glycine-tyrosine keratins. This is Keratin-associated protein 4-1 (KRTAP4-1) from Homo sapiens (Human).